A 387-amino-acid chain; its full sequence is 3-ketoacyl-CoA thiolase (387 aa).

Residue Cys91 is the Acyl-thioester intermediate of the active site. Catalysis depends on proton acceptor residues His343 and Cys373.

It belongs to the thiolase-like superfamily. Thiolase family. In terms of assembly, heterotetramer of two alpha chains (FadB) and two beta chains (FadA).

It localises to the cytoplasm. The enzyme catalyses an acyl-CoA + acetyl-CoA = a 3-oxoacyl-CoA + CoA. It participates in lipid metabolism; fatty acid beta-oxidation. Functionally, catalyzes the final step of fatty acid oxidation in which acetyl-CoA is released and the CoA ester of a fatty acid two carbons shorter is formed. The chain is 3-ketoacyl-CoA thiolase from Aeromonas salmonicida (strain A449).